We begin with the raw amino-acid sequence, 211 residues long: Thiamine-phosphate synthase (211 aa).

Residues 40 to 42 and asparagine 72 contribute to the 4-amino-2-methyl-5-(diphosphooxymethyl)pyrimidine site; that span reads QLR. Mg(2+) contacts are provided by aspartate 73 and aspartate 92. 4-amino-2-methyl-5-(diphosphooxymethyl)pyrimidine is bound at residue serine 111. Residue 136–138 coordinates 2-[(2R,5Z)-2-carboxy-4-methylthiazol-5(2H)-ylidene]ethyl phosphate; the sequence is TST. Lysine 139 lines the 4-amino-2-methyl-5-(diphosphooxymethyl)pyrimidine pocket. 2-[(2R,5Z)-2-carboxy-4-methylthiazol-5(2H)-ylidene]ethyl phosphate is bound by residues glycine 167 and 187 to 188; that span reads VS.

It belongs to the thiamine-phosphate synthase family. It depends on Mg(2+) as a cofactor.

The catalysed reaction is 2-[(2R,5Z)-2-carboxy-4-methylthiazol-5(2H)-ylidene]ethyl phosphate + 4-amino-2-methyl-5-(diphosphooxymethyl)pyrimidine + 2 H(+) = thiamine phosphate + CO2 + diphosphate. The enzyme catalyses 2-(2-carboxy-4-methylthiazol-5-yl)ethyl phosphate + 4-amino-2-methyl-5-(diphosphooxymethyl)pyrimidine + 2 H(+) = thiamine phosphate + CO2 + diphosphate. It catalyses the reaction 4-methyl-5-(2-phosphooxyethyl)-thiazole + 4-amino-2-methyl-5-(diphosphooxymethyl)pyrimidine + H(+) = thiamine phosphate + diphosphate. It functions in the pathway cofactor biosynthesis; thiamine diphosphate biosynthesis; thiamine phosphate from 4-amino-2-methyl-5-diphosphomethylpyrimidine and 4-methyl-5-(2-phosphoethyl)-thiazole: step 1/1. Condenses 4-methyl-5-(beta-hydroxyethyl)thiazole monophosphate (THZ-P) and 2-methyl-4-amino-5-hydroxymethyl pyrimidine pyrophosphate (HMP-PP) to form thiamine monophosphate (TMP). This is Thiamine-phosphate synthase from Laribacter hongkongensis (strain HLHK9).